We begin with the raw amino-acid sequence, 565 residues long: NAD-dependent malic enzyme (565 aa).

The Proton donor role is filled by Tyr-104. Arg-157 serves as a coordination point for NAD(+). Lys-175 functions as the Proton acceptor in the catalytic mechanism. A divalent metal cation contacts are provided by Glu-246, Asp-247, and Asp-270. NAD(+) contacts are provided by Asp-270 and Asn-418.

Belongs to the malic enzymes family. In terms of assembly, homotetramer. Mg(2+) serves as cofactor. The cofactor is Mn(2+).

It carries out the reaction (S)-malate + NAD(+) = pyruvate + CO2 + NADH. The catalysed reaction is oxaloacetate + H(+) = pyruvate + CO2. In Pectobacterium carotovorum subsp. carotovorum (strain PC1), this protein is NAD-dependent malic enzyme.